Consider the following 125-residue polypeptide: Ribonuclease pancreatic (125 aa).

The substrate site is built by Lys7 and Arg10. The active-site Proton acceptor is the His12. 4 disulfide bridges follow: Cys27–Cys85, Cys41–Cys96, Cys59–Cys111, and Cys66–Cys73. A glycan (N-linked (GlcNAc...) asparagine) is linked at Asn35. Residues 42-46 (KPVNT), Lys67, and Arg86 each bind substrate. The active-site Proton donor is the His120.

It belongs to the pancreatic ribonuclease family. As to quaternary structure, monomer. Interacts with and forms tight 1:1 complexes with RNH1. Dimerization of two such complexes may occur. Interaction with RNH1 inhibits this protein. Pancreas.

Its subcellular location is the secreted. It catalyses the reaction an [RNA] containing cytidine + H2O = an [RNA]-3'-cytidine-3'-phosphate + a 5'-hydroxy-ribonucleotide-3'-[RNA].. It carries out the reaction an [RNA] containing uridine + H2O = an [RNA]-3'-uridine-3'-phosphate + a 5'-hydroxy-ribonucleotide-3'-[RNA].. In terms of biological role, endonuclease that catalyzes the cleavage of RNA on the 3' side of pyrimidine nucleotides. Acts on single-stranded and double-stranded RNA. The polypeptide is Ribonuclease pancreatic (RNASE1) (Spalax ehrenbergi (Middle East blind mole rat)).